The primary structure comprises 444 residues: Phosphoribosylamine--glycine ligase (444 aa).

The ATP-grasp domain occupies 109 to 324 (RNLFKKYEID…FLDVCFAIAE (216 aa)). 140–202 (MTSLGKDVVV…EEKLVGVEFT (63 aa)) provides a ligand contact to ATP. 3 residues coordinate Mg(2+): glutamine 282, glutamate 294, and asparagine 296. 3 residues coordinate Mn(2+): glutamine 282, glutamate 294, and asparagine 296.

This sequence belongs to the GARS family. The cofactor is Mg(2+). It depends on Mn(2+) as a cofactor.

It catalyses the reaction 5-phospho-beta-D-ribosylamine + glycine + ATP = N(1)-(5-phospho-beta-D-ribosyl)glycinamide + ADP + phosphate + H(+). The protein operates within purine metabolism; IMP biosynthesis via de novo pathway; N(1)-(5-phospho-D-ribosyl)glycinamide from 5-phospho-alpha-D-ribose 1-diphosphate: step 2/2. The protein is Phosphoribosylamine--glycine ligase of Methanococcus maripaludis (strain DSM 14266 / JCM 13030 / NBRC 101832 / S2 / LL).